The primary structure comprises 207 residues: 8-oxoguanine DNA glycosylase/AP lyase (207 aa).

Catalysis depends on residues Lys-129 and Asp-147.

The protein belongs to the type-2 OGG1 family.

The enzyme catalyses 2'-deoxyribonucleotide-(2'-deoxyribose 5'-phosphate)-2'-deoxyribonucleotide-DNA = a 3'-end 2'-deoxyribonucleotide-(2,3-dehydro-2,3-deoxyribose 5'-phosphate)-DNA + a 5'-end 5'-phospho-2'-deoxyribonucleoside-DNA + H(+). Catalyzes the excision of an oxidatively damaged form of guanine (7,8-dihydro-8-oxoguanine = 8-oxoG) from DNA. Also cleaves the DNA backbone at apurinic/apyrimidinic sites (AP sites). In Thermotoga sp. (strain RQ2), this protein is 8-oxoguanine DNA glycosylase/AP lyase.